The sequence spans 148 residues: SsrA-binding protein (148 aa).

Belongs to the SmpB family.

The protein localises to the cytoplasm. Its function is as follows. Required for rescue of stalled ribosomes mediated by trans-translation. Binds to transfer-messenger RNA (tmRNA), required for stable association of tmRNA with ribosomes. tmRNA and SmpB together mimic tRNA shape, replacing the anticodon stem-loop with SmpB. tmRNA is encoded by the ssrA gene; the 2 termini fold to resemble tRNA(Ala) and it encodes a 'tag peptide', a short internal open reading frame. During trans-translation Ala-aminoacylated tmRNA acts like a tRNA, entering the A-site of stalled ribosomes, displacing the stalled mRNA. The ribosome then switches to translate the ORF on the tmRNA; the nascent peptide is terminated with the 'tag peptide' encoded by the tmRNA and targeted for degradation. The ribosome is freed to recommence translation, which seems to be the essential function of trans-translation. The chain is SsrA-binding protein from Ehrlichia ruminantium (strain Welgevonden).